A 244-amino-acid polypeptide reads, in one-letter code: DNA repair protein RecO (244 aa).

The protein belongs to the RecO family.

Involved in DNA repair and RecF pathway recombination. The polypeptide is DNA repair protein RecO (Geobacter metallireducens (strain ATCC 53774 / DSM 7210 / GS-15)).